The sequence spans 124 residues: Ragulator complex protein LAMTOR3 homolog (124 aa).

It belongs to the LAMTOR3 family. In terms of assembly, part of the Ragulator complex composed of Lamtor3, Lamtor2, CG14184, CG14812, and Lamtor4.

Functionally, regulator of the TOR pathway, a signaling cascade that promotes cell growth in response to growth factors, energy levels, and amino acids. As part of the Ragulator complex, may activate the TOR signaling cascade in response to amino acids. The protein is Ragulator complex protein LAMTOR3 homolog of Drosophila melanogaster (Fruit fly).